The chain runs to 365 residues: Putative agmatine deiminase (365 aa).

The Amidino-cysteine intermediate role is filled by Cys357.

It belongs to the agmatine deiminase family.

It catalyses the reaction agmatine + H2O = N-carbamoylputrescine + NH4(+). In Yersinia pseudotuberculosis serotype O:1b (strain IP 31758), this protein is Putative agmatine deiminase.